Here is a 2122-residue protein sequence, read N- to C-terminus: Unique GC organizer UGO (2122 aa).

5 helical membrane passes run 19–39 (FAVAVALLDLALYVLIGTNSL), 50–70 (LFGMITSALIFIIALCGFVIV), 82–102 (TYIMPVLIICNIASVFYMQLI), 115–135 (VLTFLITGYPYVWLVAFVLIG), and 145–165 (VVCSVSLGSSCPPSVWVDVGL). 13 disordered regions span residues 337–403 (AALH…HRSA), 422–532 (FRGL…GPFV), 565–591 (DLRESRERTARAASHDTHAAADDSGLQ), 627–762 (HRRG…GRAN), 785–815 (HAASSEEERPVRPARHSWRRGSGDSRECSAS), 848–870 (MSRRRRREGKSRPHASSVSRAER), 903–949 (SKEG…ASAN), 999–1046 (RNET…LHSR), 1068–1308 (PSDL…HEAV), 1328–1368 (AGLS…SEEE), 1515–1540 (ANSSTAVSSSLPDSTAWQGSGAAASA), 1560–1608 (AAEH…TPHT), and 1639–1727 (QGLG…TFFG). Positions 363–374 (RSNTLRGCSGQV) are enriched in polar residues. Basic and acidic residues-rich tracts occupy residues 503–525 (LRMDEQSGDADKASSDVSRDPAK), 565–585 (DLRESRERTARAASHDTHAAA), and 632–645 (GARDGELVFERGEP). Positions 672–687 (RLSRSRRHKTRTYRRG) are enriched in basic residues. The segment covering 690-699 (SDGTTAGTSD) has biased composition (low complexity). Residues 707–720 (LEDEGSDSGQESES) show a composition bias toward acidic residues. Basic residues predominate over residues 725–735 (RRRMRSSRNRR). Residues 741–750 (EDSSSGTSVR) show a composition bias toward low complexity. Residues 751-760 (SEGRHCREGR) show a composition bias toward basic and acidic residues. An N-linked (GlcNAc...) asparagine glycan is attached at Asn762. Residues 848–860 (MSRRRRREGKSRP) show a composition bias toward basic residues. 2 stretches are compositionally biased toward polar residues: residues 999–1011 (RNETEMTASSPAT) and 1072–1097 (SLFTTPPASPSSLNEVQASRSSSARI). Asn1000 carries N-linked (GlcNAc...) asparagine glycosylation. An N-linked (GlcNAc...) asparagine glycan is attached at Asn1165. Over residues 1220-1261 (SREDLVGEADSHVSPEKEVFVSSRREKREEQVPRSRREERRD) the composition is skewed to basic and acidic residues. Basic residues predominate over residues 1262 to 1276 (RRGRRWRRGRRRRKA). Basic and acidic residues-rich tracts occupy residues 1277 to 1289 (RECSETEERRDSS) and 1345 to 1359 (GDMRERQIYETHSDG). Residues 1515 to 1527 (ANSSTAVSSSLPD) are compositionally biased toward polar residues. An N-linked (GlcNAc...) asparagine glycan is attached at Asn1516. Composition is skewed to low complexity over residues 1528-1540 (STAWQGSGAAASA) and 1597-1608 (TQTPQTPQTPHT). Residues 1684–1693 (LSATPSTRLQ) are compositionally biased toward polar residues. 5 helical membrane-spanning segments follow: residues 1859-1879 (VAWLLFLICFYATAFHGLLRL), 1956-1976 (MLALSFLQFVYAVFDNTWHLI), 1989-2009 (IIPASPSLEIAAVQTVYILAV), 2017-2037 (IFLLYIITYIIIFFVALPPGV), and 2040-2060 (VQLFTISMAGWLFTCVGGQLF). Residues 2102-2122 (DEGSEDEVSMGSGHLVGDRSA) are disordered.

In terms of assembly, interacts with guanylate cyclase GC; the interaction regulates guanylate cyclase GC trafficking and catalytic activity.

It localises to the cell membrane. In tachyzoites, required for the cellular trafficking of guanylate cyclase GC to the cell membrane and for GC guanylate cyclase activity. The sequence is that of Unique GC organizer UGO from Toxoplasma gondii (strain ATCC 50853 / GT1).